A 201-amino-acid polypeptide reads, in one-letter code: Large ribosomal subunit protein uL4 (201 aa).

The interval T43–R69 is disordered.

This sequence belongs to the universal ribosomal protein uL4 family. Part of the 50S ribosomal subunit.

In terms of biological role, one of the primary rRNA binding proteins, this protein initially binds near the 5'-end of the 23S rRNA. It is important during the early stages of 50S assembly. It makes multiple contacts with different domains of the 23S rRNA in the assembled 50S subunit and ribosome. Forms part of the polypeptide exit tunnel. This is Large ribosomal subunit protein uL4 from Idiomarina loihiensis (strain ATCC BAA-735 / DSM 15497 / L2-TR).